Here is a 472-residue protein sequence, read N- to C-terminus: Serine/threonine-protein kinase ULK3 (472 aa).

A Protein kinase domain is found at 14 to 270 (FILTERLGSG…FQDFFAHPWV (257 aa)). ATP-binding positions include 20 to 28 (LGSGTYATV) and lysine 44. Residue aspartate 137 is the Proton acceptor of the active site. Residue serine 176 is modified to Phosphoserine. The MIT 1 domain occupies 280–348 (SLGRATALVV…SRAEELKAIV (69 aa)). A phosphoserine; by autocatalysis mark is found at serine 300, serine 350, serine 384, and serine 464. The region spanning 375–444 (RLLAALEVAS…ARAEYLKEQV (70 aa)) is the MIT 2 domain.

It belongs to the protein kinase superfamily. Ser/Thr protein kinase family. APG1/unc-51/ULK1 subfamily. As to quaternary structure, interacts (via protein kinase domain) with SUFU. Autophosphorylated. Autophosphorylation is blocked by interaction with SUFU. As to expression, widely expressed. Highest levels observed in fetal brain. In adult tissues, high levels in brain, liver and kidney, moderate levels in testis and adrenal gland and low levels in heart, lung, stomach, thymus, prostate and placenta. In the brain, highest expression in the hippocampus, high levels also detected in the cerebellum, olfactory bulb and optic nerve. In the central nervous system, lowest levels in the spinal cord.

The protein resides in the cytoplasm. It carries out the reaction L-seryl-[protein] + ATP = O-phospho-L-seryl-[protein] + ADP + H(+). The enzyme catalyses L-threonyl-[protein] + ATP = O-phospho-L-threonyl-[protein] + ADP + H(+). Serine/threonine protein kinase that acts as a regulator of Sonic hedgehog (SHH) signaling and autophagy. Acts as a negative regulator of SHH signaling in the absence of SHH ligand: interacts with SUFU, thereby inactivating the protein kinase activity and preventing phosphorylation of GLI proteins (GLI1, GLI2 and/or GLI3). Positively regulates SHH signaling in the presence of SHH: dissociates from SUFU, autophosphorylates and mediates phosphorylation of GLI2, activating it and promoting its nuclear translocation. Phosphorylates in vitro GLI2, as well as GLI1 and GLI3, although less efficiently. Also acts as a regulator of autophagy: following cellular senescence, able to induce autophagy. This is Serine/threonine-protein kinase ULK3 (ULK3) from Homo sapiens (Human).